A 309-amino-acid polypeptide reads, in one-letter code: uncharacterized protein (309 aa).

This is an uncharacterized protein from Aedes vexans (Inland floodwater mosquito).